We begin with the raw amino-acid sequence, 513 residues long: uncharacterized protein (513 aa).

The TRAM domain maps to 3–61; it reads NLKIGQKLQLEIERMGINGEGIGVISGRLVFIPYALPGEEVLVEITENARNFSRAKLVK. S-adenosyl-L-methionine contacts are provided by glutamine 309, tyrosine 338, aspartate 359, and aspartate 407. Cysteine 434 serves as the catalytic Nucleophile.

It belongs to the class I-like SAM-binding methyltransferase superfamily. RNA M5U methyltransferase family.

This is an uncharacterized protein from Lactococcus lactis subsp. lactis (strain IL1403) (Streptococcus lactis).